Here is a 262-residue protein sequence, read N- to C-terminus: Hemin import ATP-binding protein HmuV (262 aa).

The 242-residue stretch at 3-244 (LQARNLTLAR…DHMRRVYGIE (242 aa)) folds into the ABC transporter domain. An ATP-binding site is contributed by 35–42 (GANGAGKS).

The protein belongs to the ABC transporter superfamily. Heme (hemin) importer (TC 3.A.1.14.5) family. As to quaternary structure, the complex is composed of two ATP-binding proteins (HmuV), two transmembrane proteins (HmuU) and a solute-binding protein (HmuT).

It is found in the cell inner membrane. In terms of biological role, part of the ABC transporter complex HmuTUV involved in hemin import. Responsible for energy coupling to the transport system. The protein is Hemin import ATP-binding protein HmuV of Bordetella pertussis (strain Tohama I / ATCC BAA-589 / NCTC 13251).